The primary structure comprises 249 residues: MTRKLVLLRHGQSQWNLDNRFTGWVDVELTDQGRQEAVAAGKLMKDEGLQFDVAHTSVLKRAIHTLQGALKELDQDWLPVSKSWRLNERHYGGLQGLDKAETAAKHGEEQVKIWRRSYDIPPPAMDVDDPGHPCHDRRYATLDRNALPGTESLATTLVRVLPYWHDAIAPQLKAGQTVLVTAHGNSLRALYKYLNDVSNEQILELNIPTGIPLLFELDDNLQVRSFRYLGDPEAAKRAAEAVANQGKAK.

Substrate-binding positions include 9–16 (RHGQSQWN), 22–23 (TG), R61, 88–91 (ERHY), K99, 115–116 (RR), and 184–185 (GN). H10 acts as the Tele-phosphohistidine intermediate in catalysis. The active-site Proton donor/acceptor is E88.

This sequence belongs to the phosphoglycerate mutase family. BPG-dependent PGAM subfamily. As to quaternary structure, homodimer.

It catalyses the reaction (2R)-2-phosphoglycerate = (2R)-3-phosphoglycerate. Its pathway is carbohydrate degradation; glycolysis; pyruvate from D-glyceraldehyde 3-phosphate: step 3/5. Functionally, catalyzes the interconversion of 2-phosphoglycerate and 3-phosphoglycerate. This Xanthomonas oryzae pv. oryzae (strain MAFF 311018) protein is 2,3-bisphosphoglycerate-dependent phosphoglycerate mutase.